Here is a 579-residue protein sequence, read N- to C-terminus: Adenine deaminase (579 aa).

The protein belongs to the metallo-dependent hydrolases superfamily. Adenine deaminase family. Mn(2+) serves as cofactor.

The catalysed reaction is adenine + H2O + H(+) = hypoxanthine + NH4(+). The polypeptide is Adenine deaminase (Listeria welshimeri serovar 6b (strain ATCC 35897 / DSM 20650 / CCUG 15529 / CIP 8149 / NCTC 11857 / SLCC 5334 / V8)).